Here is a 299-residue protein sequence, read N- to C-terminus: tRNA dimethylallyltransferase (299 aa).

ATP is bound at residue 13 to 20 (GPTASGKT). 15–20 (TASGKT) is a substrate binding site. An interaction with substrate tRNA region spans residues 38-41 (DSRQ).

The protein belongs to the IPP transferase family. As to quaternary structure, monomer. It depends on Mg(2+) as a cofactor.

The catalysed reaction is adenosine(37) in tRNA + dimethylallyl diphosphate = N(6)-dimethylallyladenosine(37) in tRNA + diphosphate. Functionally, catalyzes the transfer of a dimethylallyl group onto the adenine at position 37 in tRNAs that read codons beginning with uridine, leading to the formation of N6-(dimethylallyl)adenosine (i(6)A). The polypeptide is tRNA dimethylallyltransferase (Parasynechococcus marenigrum (strain WH8102)).